Here is a 479-residue protein sequence, read N- to C-terminus: Calcium/calmodulin-dependent protein kinase type II delta chain (479 aa).

Residues 14 to 272 enclose the Protein kinase domain; it reads YQLFEELGKG…ASEALKHPWI (259 aa). Residues 20-28 and lysine 43 each bind ATP; that span reads LGKGAFSVV. Aspartate 136 serves as the catalytic Proton acceptor. Threonine 287 bears the Phosphothreonine mark. 2 positions are modified to phosphoserine: serine 315 and serine 319. Threonine 337 bears the Phosphothreonine mark.

It belongs to the protein kinase superfamily. CAMK Ser/Thr protein kinase family. CaMK subfamily. CAMK2 is composed of four different chains: alpha, beta, gamma, and delta. The different isoforms assemble into homo- or heteromultimeric holoenzymes composed of 8 to 12 subunits.

It carries out the reaction L-seryl-[protein] + ATP = O-phospho-L-seryl-[protein] + ADP + H(+). The enzyme catalyses L-threonyl-[protein] + ATP = O-phospho-L-threonyl-[protein] + ADP + H(+). With respect to regulation, autophosphorylation of CAMK2 plays an important role in the regulation of the kinase activity. Its function is as follows. CaM-kinase II (CAMK2) is a prominent kinase in the central nervous system. This Gallus gallus (Chicken) protein is Calcium/calmodulin-dependent protein kinase type II delta chain (CAMK2D).